A 346-amino-acid polypeptide reads, in one-letter code: D-fructose 1,6-bisphosphatase class 2/sedoheptulose 1,7-bisphosphatase (346 aa).

Mn(2+) is bound by residues aspartate 33, glutamate 57, aspartate 97, and glutamate 100. Residues 100–102 (EGT), tyrosine 131, 176–178 (RDR), and 198–200 (DGD) each bind substrate. Glutamate 225 contributes to the Mn(2+) binding site.

Belongs to the FBPase class 2 family. Homotetramer. Requires Mn(2+) as cofactor.

The catalysed reaction is beta-D-fructose 1,6-bisphosphate + H2O = beta-D-fructose 6-phosphate + phosphate. It carries out the reaction D-sedoheptulose 1,7-bisphosphate + H2O = D-sedoheptulose 7-phosphate + phosphate. It functions in the pathway carbohydrate biosynthesis; Calvin cycle. Functionally, catalyzes the hydrolysis of fructose 1,6-bisphosphate (Fru 1,6-P2) and sedoheptulose 1,7-bisphosphate (Sed 1,7-P2) to fructose 6-phosphate and sedoheptulose 7-phosphate, respectively. The protein is D-fructose 1,6-bisphosphatase class 2/sedoheptulose 1,7-bisphosphatase of Gloeobacter violaceus (strain ATCC 29082 / PCC 7421).